The sequence spans 206 residues: Protein phosphatase inhibitor 2 (206 aa).

The interval 1 to 36 (MAASTASHRPIKGILKNKTSAASPPVVPSAEQPRPI) is disordered. The residue at position 2 (Ala2) is an N-acetylalanine. Residues 12 to 17 (KGILKN) are required for binding PPP1CC. The required for binding the 'RVXF' binding groove of PPP1CC stretch occupies residues 44 to 56 (KSQKWDEMNILAT). Phosphoserine; by ATM is present on Ser45. Thr74 is subject to Phosphothreonine. Residues 75–143 (PYHNMIGDDE…EREKKRQFEM (69 aa)) form a disordered region. The segment covering 81–92 (GDDEDAYSDSEG) has biased composition (acidic residues). Phosphoserine is present on residues Ser88 and Ser90. Phosphothreonine occurs at positions 97 and 117. Residues 111-121 (SEPKYRTREQE) show a composition bias toward basic and acidic residues. Phosphoserine occurs at positions 122, 123, and 131. A compositionally biased stretch (acidic residues) spans 122–131 (SSGEEDNDLS). Residues 132 to 143 (PEEREKKRQFEM) show a composition bias toward basic and acidic residues. Positions 148–151 (HYNE) are required for binding PPP1CC catalytic center, displacing metal ions and inhibition of PPP1CC catalytic activity. Residues 164–206 (KDLHDDDEDEEMAETADGDSMNVEESSQGSTTSDHLQHKSQSS) form a disordered region. A compositionally biased stretch (acidic residues) spans 168–180 (DDDEDEEMAETAD). Residues 186–206 (VEESSQGSTTSDHLQHKSQSS) are compositionally biased toward polar residues.

The protein belongs to the protein phosphatase inhibitor 2 family. As to quaternary structure, heterodimer with PP1. Post-translationally, phosphorylation on Ser-45 by ATM activates PP1 by dissociating the PP1-PPP1R2 complex. Phosphorylation on Thr-74 by GSK3 activates PP1 by dissociating the PP1-PPP1R2 complex.

Functionally, inhibitor of protein-phosphatase 1. This chain is Protein phosphatase inhibitor 2 (Ppp1r2), found in Mus musculus (Mouse).